Reading from the N-terminus, the 378-residue chain is Erythronate-4-phosphate dehydrogenase (378 aa).

The substrate site is built by S45 and T66. Residues D146 and T175 each coordinate NAD(+). R208 is an active-site residue. Residue D232 coordinates NAD(+). The active site involves E237. The Proton donor role is filled by H254. Residue G257 coordinates NAD(+). Y258 lines the substrate pocket.

Belongs to the D-isomer specific 2-hydroxyacid dehydrogenase family. PdxB subfamily. Homodimer.

It localises to the cytoplasm. It catalyses the reaction 4-phospho-D-erythronate + NAD(+) = (R)-3-hydroxy-2-oxo-4-phosphooxybutanoate + NADH + H(+). Its pathway is cofactor biosynthesis; pyridoxine 5'-phosphate biosynthesis; pyridoxine 5'-phosphate from D-erythrose 4-phosphate: step 2/5. Its function is as follows. Catalyzes the oxidation of erythronate-4-phosphate to 3-hydroxy-2-oxo-4-phosphonooxybutanoate. The protein is Erythronate-4-phosphate dehydrogenase of Escherichia coli O8 (strain IAI1).